We begin with the raw amino-acid sequence, 440 residues long: Protein disulfide-isomerase 5-2 (440 aa).

The signal sequence occupies residues Met-1–Ser-23. Residues Ser-24–Ala-139 enclose the Thioredoxin domain. Catalysis depends on nucleophile residues Cys-61 and Cys-64. Cys-61 and Cys-64 are joined by a disulfide. At Thr-160 the chain carries Phosphothreonine. N-linked (GlcNAc...) asparagine glycosylation occurs at Asn-171. Residues Ser-376–Leu-396 traverse the membrane as a helical segment. Positions Thr-406–Asp-440 are disordered. Residues Ser-430–Asp-440 are compositionally biased toward basic and acidic residues.

It belongs to the protein disulfide isomerase family. As to expression, widely expressed.

It localises to the membrane. Functionally, acts as a protein-folding catalyst that interacts with nascent polypeptides to catalyze the formation, isomerization, and reduction or oxidation of disulfide bonds. The polypeptide is Protein disulfide-isomerase 5-2 (PDIL5-2) (Arabidopsis thaliana (Mouse-ear cress)).